Consider the following 99-residue polypeptide: Co-chaperonin GroES (99 aa).

The protein belongs to the GroES chaperonin family. In terms of assembly, heptamer of 7 subunits arranged in a ring. Interacts with the chaperonin GroEL.

It is found in the cytoplasm. In terms of biological role, together with the chaperonin GroEL, plays an essential role in assisting protein folding. The GroEL-GroES system forms a nano-cage that allows encapsulation of the non-native substrate proteins and provides a physical environment optimized to promote and accelerate protein folding. GroES binds to the apical surface of the GroEL ring, thereby capping the opening of the GroEL channel. The chain is Co-chaperonin GroES from Rhodococcus erythropolis (strain PR4 / NBRC 100887).